Here is a 194-residue protein sequence, read N- to C-terminus: Probable GTP-binding protein EngB (194 aa).

One can recognise an EngB-type G domain in the interval 22 to 194 (PLPEVALAGR…AWKAILHAIS (173 aa)). Residues 30 to 37 (GRSNVGKS), 57 to 61 (GKTQT), 75 to 78 (DVPG), 142 to 145 (TKCD), and 174 to 176 (FSS) contribute to the GTP site. Residues Ser-37 and Thr-59 each contribute to the Mg(2+) site.

It belongs to the TRAFAC class TrmE-Era-EngA-EngB-Septin-like GTPase superfamily. EngB GTPase family. It depends on Mg(2+) as a cofactor.

Its function is as follows. Necessary for normal cell division and for the maintenance of normal septation. This chain is Probable GTP-binding protein EngB, found in Halalkalibacterium halodurans (strain ATCC BAA-125 / DSM 18197 / FERM 7344 / JCM 9153 / C-125) (Bacillus halodurans).